The following is a 552-amino-acid chain: Thermosome subunit beta (552 aa).

It belongs to the TCP-1 chaperonin family. As to quaternary structure, forms a Heterooligomeric complex of two stacked nine-membered rings; one of alpha and the other of beta subunits. The N-terminus is blocked.

Functionally, molecular chaperone; binds unfolded polypeptides in vitro, and has a weak ATPase activity. The protein is Thermosome subunit beta (thsB) of Sulfurisphaera tokodaii (strain DSM 16993 / JCM 10545 / NBRC 100140 / 7) (Sulfolobus tokodaii).